The sequence spans 264 residues: Phosphonoacetaldehyde hydrolase (264 aa).

Asp-9 serves as the catalytic Nucleophile. Asp-9 and Ala-11 together coordinate Mg(2+). The active-site Schiff-base intermediate with substrate is the Lys-50. Mg(2+) is bound at residue Asp-183.

The protein belongs to the HAD-like hydrolase superfamily. PhnX family. In terms of assembly, homodimer. Requires Mg(2+) as cofactor.

It catalyses the reaction phosphonoacetaldehyde + H2O = acetaldehyde + phosphate + H(+). Functionally, involved in phosphonate degradation. This chain is Phosphonoacetaldehyde hydrolase, found in Bacillus cereus (strain B4264).